Reading from the N-terminus, the 527-residue chain is ATP synthase subunit alpha (527 aa).

G172–T179 contacts ATP.

It belongs to the ATPase alpha/beta chains family. As to quaternary structure, F-type ATPases have 2 components, CF(1) - the catalytic core - and CF(0) - the membrane proton channel. CF(1) has five subunits: alpha(3), beta(3), gamma(1), delta(1), epsilon(1). CF(0) has three main subunits: a(1), b(2) and c(9-12). The alpha and beta chains form an alternating ring which encloses part of the gamma chain. CF(1) is attached to CF(0) by a central stalk formed by the gamma and epsilon chains, while a peripheral stalk is formed by the delta and b chains.

It localises to the cell inner membrane. The enzyme catalyses ATP + H2O + 4 H(+)(in) = ADP + phosphate + 5 H(+)(out). Functionally, produces ATP from ADP in the presence of a proton gradient across the membrane. The alpha chain is a regulatory subunit. This Bacteroides thetaiotaomicron (strain ATCC 29148 / DSM 2079 / JCM 5827 / CCUG 10774 / NCTC 10582 / VPI-5482 / E50) protein is ATP synthase subunit alpha.